The primary structure comprises 517 residues: MDIVGGQNLRQMWDDLAEVYGDKTALIFESCEGIVRQFSYASLNEEINRTANLFHSLGIRKGDRVALHLDNCPEFIFCWFGLAKIGAIMVPINARLLGEESAWILQNSQVSLLVTSAQFYPMYREIRQGNSTPLNHICLIGEQLPADDGVSLFSQLQARQSATLCYTPALSTDDAAEILFTSGTTSRPKGVVITHYNLRFAGYYSAWQIALRDDDVYMTVMPAFHIDCQCTAAMPAFSAGSTFVLLEKYSARAFWGQVRKYQATVTECIPMMIRTLMVQPAAPTDRQHHLREVMFYLNLSAQEKDAFTERFGVRLLTSYGMTETIVGIIGDRPGDKRRWPSIGRVGFSYEAEIRDDQNRPLPAGEIGEICIKGIPGKTIFKEYYMQPEATARALEPEGWLHTGDSGYQDEDGYFYFVDRRCNMIKRGGENVSCVELENIISAHPKIQDIVVVGIKDAIRDEAIKAFIVLNEGETLSEAEFFSFCENNMAKFKVPSFMEIRTDLPRNCSGKIIKKNLK.

It belongs to the ATP-dependent AMP-binding enzyme family.

It carries out the reaction 4-(trimethylamino)butanoate + ATP + CoA = 4-(trimethylamino)butanoyl-CoA + AMP + diphosphate. It catalyses the reaction crotonobetaine + ATP + CoA = crotonobetainyl-CoA + AMP + diphosphate. The enzyme catalyses (R)-carnitine + ATP + CoA = (R)-carnitinyl-CoA + AMP + diphosphate. It functions in the pathway amine and polyamine metabolism; carnitine metabolism. Catalyzes the transfer of CoA to carnitine, generating the initial carnitinyl-CoA needed for the CaiB reaction cycle. Also has activity toward crotonobetaine and gamma-butyrobetaine. The protein is Crotonobetaine/carnitine--CoA ligase of Salmonella paratyphi A (strain ATCC 9150 / SARB42).